A 366-amino-acid polypeptide reads, in one-letter code: tRNA/tmRNA (uracil-C(5))-methyltransferase (366 aa).

Positions 190, 218, 223, 239, and 299 each coordinate S-adenosyl-L-methionine. C324 acts as the Nucleophile in catalysis. E358 acts as the Proton acceptor in catalysis.

Belongs to the class I-like SAM-binding methyltransferase superfamily. RNA M5U methyltransferase family. TrmA subfamily.

It carries out the reaction uridine(54) in tRNA + S-adenosyl-L-methionine = 5-methyluridine(54) in tRNA + S-adenosyl-L-homocysteine + H(+). It catalyses the reaction uridine(341) in tmRNA + S-adenosyl-L-methionine = 5-methyluridine(341) in tmRNA + S-adenosyl-L-homocysteine + H(+). Functionally, dual-specificity methyltransferase that catalyzes the formation of 5-methyluridine at position 54 (m5U54) in all tRNAs, and that of position 341 (m5U341) in tmRNA (transfer-mRNA). In Salmonella paratyphi A (strain ATCC 9150 / SARB42), this protein is tRNA/tmRNA (uracil-C(5))-methyltransferase.